Here is a 177-residue protein sequence, read N- to C-terminus: Flavodoxin (177 aa).

Residues 4 to 173 (IGIFFGSDTG…RIDSWLEKLK (170 aa)) form the Flavodoxin-like domain.

It belongs to the flavodoxin family. Requires FMN as cofactor.

Functionally, low-potential electron donor to a number of redox enzymes. NifF is the electron donor to nitrogenase. The chain is Flavodoxin (nifF) from Enterobacter agglomerans (Erwinia herbicola).